We begin with the raw amino-acid sequence, 608 residues long: Lysophospholipase 2 (608 aa).

Positions 1 to 17 (MLVWQSILLFLVGCVLS) are cleaved as a signal peptide. The PLA2c domain maps to 30–564 (QCPEGKLTRS…ENYCWDGTIY (535 aa)). N259, N365, N450, N464, N491, and N572 each carry an N-linked (GlcNAc...) asparagine glycan.

It belongs to the lysophospholipase family.

The protein resides in the secreted. The catalysed reaction is a 1-acyl-sn-glycero-3-phosphocholine + H2O = sn-glycerol 3-phosphocholine + a fatty acid + H(+). Its function is as follows. Catalyzes the release of fatty acids from lysophospholipids. Phospholipase B may well contribute to pathogenicity by abetting the fungus in damaging and traversing host cell membranes, processes which likely increase the rapidity of disseminated infection. The protein is Lysophospholipase 2 (PLB2) of Candida albicans (Yeast).